Reading from the N-terminus, the 590-residue chain is Beta-fructofuranosidase, insoluble isoenzyme 4 (590 aa).

A signal peptide spans 1–28 (MVMAPIPQPWHQWPFLILFFLVLFSCES). Residues 71-74 (WIND) and Q90 each bind substrate. D74 is an active-site residue. An N-linked (GlcNAc...) asparagine glycan is attached at N94. Substrate contacts are provided by residues W98 and 133 to 134 (WT). N167 carries N-linked (GlcNAc...) asparagine glycosylation. 198-199 (RD) contributes to the substrate binding site. N-linked (GlcNAc...) asparagine glycosylation is present at N247. 2 residues coordinate substrate: E253 and D287. A glycan (N-linked (GlcNAc...) asparagine) is linked at N345. Cysteines 445 and 491 form a disulfide. N565 carries an N-linked (GlcNAc...) asparagine glycan.

This sequence belongs to the glycosyl hydrolase 32 family. Expressed in leaves. Expressed at moderate levels in roots and flowers, and weakly in seeds.

It is found in the secreted. Its subcellular location is the extracellular space. It localises to the apoplast. The protein localises to the cell wall. It catalyses the reaction Hydrolysis of terminal non-reducing beta-D-fructofuranoside residues in beta-D-fructofuranosides.. In terms of biological role, may play a role in sucrose partitioning during seed development and in stress response. This is Beta-fructofuranosidase, insoluble isoenzyme 4 (CIN4) from Oryza sativa subsp. japonica (Rice).